The chain runs to 393 residues: Formate-dependent phosphoribosylglycinamide formyltransferase (393 aa).

N(1)-(5-phospho-beta-D-ribosyl)glycinamide-binding positions include 22–23 and Glu-82; that span reads EL. ATP-binding positions include Arg-114, Lys-155, 160 to 165, 195 to 198, and Glu-203; these read SSGKGQ and EGFI. The ATP-grasp domain maps to 119 to 308; the sequence is RLAAEELGLP…EFALHARAIL (190 aa). Mg(2+) contacts are provided by Glu-267 and Glu-279. N(1)-(5-phospho-beta-D-ribosyl)glycinamide-binding positions include Asp-286, Lys-356, and 363–364; that span reads RR.

The protein belongs to the PurK/PurT family. Homodimer.

The enzyme catalyses N(1)-(5-phospho-beta-D-ribosyl)glycinamide + formate + ATP = N(2)-formyl-N(1)-(5-phospho-beta-D-ribosyl)glycinamide + ADP + phosphate + H(+). Its pathway is purine metabolism; IMP biosynthesis via de novo pathway; N(2)-formyl-N(1)-(5-phospho-D-ribosyl)glycinamide from N(1)-(5-phospho-D-ribosyl)glycinamide (formate route): step 1/1. Involved in the de novo purine biosynthesis. Catalyzes the transfer of formate to 5-phospho-ribosyl-glycinamide (GAR), producing 5-phospho-ribosyl-N-formylglycinamide (FGAR). Formate is provided by PurU via hydrolysis of 10-formyl-tetrahydrofolate. In Azoarcus sp. (strain BH72), this protein is Formate-dependent phosphoribosylglycinamide formyltransferase.